The primary structure comprises 374 residues: Low-specificity L-threonine aldolase (374 aa).

At K213 the chain carries N6-(pyridoxal phosphate)lysine. Residues 354–374 (HPHKDDGRNNKKMYSLDAIKK) are disordered.

It belongs to the threonine aldolase family. In terms of assembly, homotetramer. The cofactor is pyridoxal 5'-phosphate.

The enzyme catalyses L-threonine = acetaldehyde + glycine. It carries out the reaction L-allo-threonine = acetaldehyde + glycine. It participates in amino-acid degradation; L-threonine degradation via aldolase pathway; acetaldehyde and glycine from L-threonine: step 1/1. The polypeptide is Low-specificity L-threonine aldolase (GLY1) (Candida albicans (Yeast)).